Consider the following 205-residue polypeptide: Putative 3-methyladenine DNA glycosylase (205 aa).

This sequence belongs to the DNA glycosylase MPG family.

This chain is Putative 3-methyladenine DNA glycosylase, found in Bacillus cereus (strain AH187).